The following is a 229-amino-acid chain: Urease accessory protein UreF (229 aa).

The protein belongs to the UreF family. As to quaternary structure, ureD, UreF and UreG form a complex that acts as a GTP-hydrolysis-dependent molecular chaperone, activating the urease apoprotein by helping to assemble the nickel containing metallocenter of UreC. The UreE protein probably delivers the nickel.

The protein localises to the cytoplasm. Its function is as follows. Required for maturation of urease via the functional incorporation of the urease nickel metallocenter. The polypeptide is Urease accessory protein UreF (Staphylococcus epidermidis (strain ATCC 35984 / DSM 28319 / BCRC 17069 / CCUG 31568 / BM 3577 / RP62A)).